A 446-amino-acid polypeptide reads, in one-letter code: Na(+)-translocating NADH-quinone reductase subunit A (446 aa).

It belongs to the NqrA family. In terms of assembly, composed of six subunits; NqrA, NqrB, NqrC, NqrD, NqrE and NqrF.

The enzyme catalyses a ubiquinone + n Na(+)(in) + NADH + H(+) = a ubiquinol + n Na(+)(out) + NAD(+). In terms of biological role, NQR complex catalyzes the reduction of ubiquinone-1 to ubiquinol by two successive reactions, coupled with the transport of Na(+) ions from the cytoplasm to the periplasm. NqrA to NqrE are probably involved in the second step, the conversion of ubisemiquinone to ubiquinol. The chain is Na(+)-translocating NADH-quinone reductase subunit A from Pasteurella multocida (strain Pm70).